Reading from the N-terminus, the 138-residue chain is Protein SPMIP3 (138 aa).

The polypeptide is Protein SPMIP3 (SPMIP3) (Bos taurus (Bovine)).